Reading from the N-terminus, the 76-residue chain is Putative phosphotransferase enzyme IIA component YyzE (76 aa).

The PTS EIIA type-1 domain occupies 1–76 (MVTPTKHAIG…LHQKIFTVVS (76 aa)). H22 (tele-phosphohistidine intermediate) is an active-site residue.

It localises to the cytoplasm. In terms of biological role, the phosphoenolpyruvate-dependent sugar phosphotransferase system (PTS), a major carbohydrate active -transport system, catalyzes the phosphorylation of incoming sugar substrates concomitant with their translocation across the cell membrane. The protein is Putative phosphotransferase enzyme IIA component YyzE (yyzE) of Bacillus subtilis (strain 168).